The following is a 217-amino-acid chain: Cytidylate kinase (217 aa).

9–17 (GPAASGKSS) is a binding site for ATP.

Belongs to the cytidylate kinase family. Type 1 subfamily.

The protein resides in the cytoplasm. It catalyses the reaction CMP + ATP = CDP + ADP. The enzyme catalyses dCMP + ATP = dCDP + ADP. The protein is Cytidylate kinase of Bdellovibrio bacteriovorus (strain ATCC 15356 / DSM 50701 / NCIMB 9529 / HD100).